The following is a 211-amino-acid chain: Riboflavin transporter RibU (211 aa).

The next 5 membrane-spanning stretches (helical) occupy residues 34–54 (AYIAILSAVSFLLLYFSFPLI), 66–86 (ILPVLIALVIFDFKSAIGVLL), 104–124 (IGLPMNFVALGVFVWGLSYFW), 134–154 (ILGSVLGTILLTVAMVVLNYI), and 180–200 (AMVVPFNLLEGLIFSVAFALI).

Belongs to the prokaryotic riboflavin transporter (P-RFT) (TC 2.A.87) family. In terms of assembly, forms a stable energy-coupling factor (ECF) transporter complex composed of 2 membrane-embedded substrate-binding proteins (S component), 2 ATP-binding proteins (A component) and 2 transmembrane proteins (T component) upon coexpression of the 4 components in E.coli.

It is found in the cell membrane. In terms of biological role, substrate-binding (S) component of an energy-coupling factor (ECF) ABC-transporter complex. Mediates riboflavin uptake, may also transport FMN and roseoflavin. Probably a riboflavin-binding protein that interacts with the energy-coupling factor (ECF) ABC-transporter complex. Unlike classic ABC transporters this ECF transporter provides the energy necessary to transport a number of different substrates. The substrates themselves are bound by transmembrane, not extracytoplasmic soluble proteins. Expression of the complex plus RibU in E.coli allows riboflavin uptake. In Streptococcus thermophilus (strain ATCC BAA-250 / LMG 18311), this protein is Riboflavin transporter RibU (ribU).